Reading from the N-terminus, the 144-residue chain is Transcriptional regulator SlyA (144 aa).

The 134-residue stretch at 2-135 (ESSLGSDLAR…LNNIIAKLER (134 aa)) folds into the HTH marR-type domain. A DNA-binding region (H-T-H motif) is located at residues 49-72 (QIQLAKAIGIEQPSLVRTLDQLES).

The protein belongs to the SlyA family. In terms of assembly, homodimer.

In terms of biological role, transcription regulator that can specifically activate or repress expression of target genes. The polypeptide is Transcriptional regulator SlyA (Blochmanniella floridana).